The primary structure comprises 239 residues: Type II restriction enzyme Eco47II (239 aa).

The catalysed reaction is Endonucleolytic cleavage of DNA to give specific double-stranded fragments with terminal 5'-phosphates.. Its function is as follows. A P subtype restriction enzyme that recognizes the double-stranded sequence 5'-GGNCC-3'; the cleavage site is unknown. This is Type II restriction enzyme Eco47II from Escherichia coli.